The chain runs to 180 residues: MPLLNSVTTPYAEALLQVVSENDQTEEMVKEVKQLLSLINDSPDLEKTLSSPVLETDTKKKIIIEIFSEKINSSLLNFLKLLADRQRIGIVTSILDRFLEIYRENSNIALATVTSAVELTDDQKGLITKKIINIAGTEKLELVTKIDPSLIGGFVASVGSKVIDASLASQIRKLGLSLSK.

Belongs to the ATPase delta chain family. As to quaternary structure, F-type ATPases have 2 components, F(1) - the catalytic core - and F(0) - the membrane proton channel. F(1) has five subunits: alpha(3), beta(3), gamma(1), delta(1), epsilon(1). CF(0) has four main subunits: a(1), b(1), b'(1) and c(10-14). The alpha and beta chains form an alternating ring which encloses part of the gamma chain. F(1) is attached to F(0) by a central stalk formed by the gamma and epsilon chains, while a peripheral stalk is formed by the delta, b and b' chains.

It is found in the cellular thylakoid membrane. Functionally, f(1)F(0) ATP synthase produces ATP from ADP in the presence of a proton or sodium gradient. F-type ATPases consist of two structural domains, F(1) containing the extramembraneous catalytic core and F(0) containing the membrane proton channel, linked together by a central stalk and a peripheral stalk. During catalysis, ATP synthesis in the catalytic domain of F(1) is coupled via a rotary mechanism of the central stalk subunits to proton translocation. This protein is part of the stalk that links CF(0) to CF(1). It either transmits conformational changes from CF(0) to CF(1) or is implicated in proton conduction. This chain is ATP synthase subunit delta, found in Prochlorococcus marinus subsp. pastoris (strain CCMP1986 / NIES-2087 / MED4).